The sequence spans 118 residues: Large ribosomal subunit protein mL53 (118 aa).

The segment at 99-118 (AAAASAPGADKVAPGTSTRR) is disordered.

The protein belongs to the mitochondrion-specific ribosomal protein mL53 family. Component of the mitochondrial ribosome large subunit (39S) which comprises a 16S rRNA and about 50 distinct proteins.

It is found in the mitochondrion. This Mus musculus (Mouse) protein is Large ribosomal subunit protein mL53 (Mrpl53).